Here is a 571-residue protein sequence, read N- to C-terminus: Acetolactate synthase large subunit (571 aa).

Thiamine diphosphate is bound at residue E51. Residues R153, 261–282, and 304–323 each bind FAD; these read HGTY…IGVR and DIDP…IVGD. A thiamine pyrophosphate binding region spans residues 394–474; that stretch reads QHQMFTALYY…VLILNLNNSS (81 aa). Residues D445 and N472 each contribute to the Mg(2+) site.

The protein belongs to the TPP enzyme family. Dimer of large and small chains. Mg(2+) is required as a cofactor. Thiamine diphosphate serves as cofactor.

The catalysed reaction is 2 pyruvate + H(+) = (2S)-2-acetolactate + CO2. Its pathway is amino-acid biosynthesis; L-isoleucine biosynthesis; L-isoleucine from 2-oxobutanoate: step 1/4. It participates in amino-acid biosynthesis; L-valine biosynthesis; L-valine from pyruvate: step 1/4. The polypeptide is Acetolactate synthase large subunit (ilvI) (Buchnera aphidicola subsp. Schizaphis graminum (strain Sg)).